Consider the following 664-residue polypeptide: Intraflagellar transport protein 70B (664 aa).

TPR repeat units follow at residues 11 to 44, 45 to 78, 153 to 186, 188 to 220, 385 to 418, 423 to 456, and 458 to 491; these read DGEFTAVVYRLIRDSRYSEAVQLLSAELQRSSRS, RAGLSLLAYCYYRLQEFELAAECYEQLSQMHPEL, YDGQINLGCLLYKEGHYEAACSKFLAALQASGYQ, DLSYNLALAYYSSRQYAPALKHIADIIERGIRQ, LTEQLRKLTIQVQDSRHSRDDESAKKAVNEYDET, IPVLMAQAKIYWNFENYPMVEKIFRKSVEFCNDH, and VWKLNVAHVLFMQENKYKEAIGFYEPIVKKNYDN. The stretch at 507–534 forms a coiled coil; the sequence is YIMTSQNEEAEELMRKIEKEEEQLSYGD. The stretch at 543 to 576 is one TPR 8 repeat; sequence CIVNLVIGTLYCAKGNYDFGISRVIKSLEPYHKK.

It belongs to the TTC30/dfy-1/fleer family. In terms of assembly, interacts with the IFT B complex components IFT27, IFT46, IFT74, IFT52, IFT57, IFT80, IFT81 and IFT88. Interacts with KIF17.

It localises to the cell projection. The protein localises to the cilium. In terms of biological role, required for polyglutamylation of axonemal tubulin. Plays a role in anterograde intraflagellar transport (IFT), the process by which cilia precursors are transported from the base of the cilium to the site of their incorporation at the tip. This is Intraflagellar transport protein 70B (Ift70b) from Mus musculus (Mouse).